A 392-amino-acid polypeptide reads, in one-letter code: GPI alpha-1,4-mannosyltransferase I, catalytic subunit (392 aa).

The Cytoplasmic segment spans residues Met1 to Arg4. A helical transmembrane segment spans residues Val5–Tyr25. Residues Gln26–Pro65 lie on the Lumenal side of the membrane. A helical transmembrane segment spans residues Leu66 to Phe86. Topologically, residues Gly87 to Met125 are cytoplasmic. A helical membrane pass occupies residues Ala126–Leu148. Residues Gln149 to Ala156 are Lumenal-facing. A helical membrane pass occupies residues Ala157–Ile177. The Cytoplasmic portion of the chain corresponds to Ala178–Pro198. A helical membrane pass occupies residues Ala199 to Tyr219. Residues Cys220–Ser261 are Lumenal-facing. Residues Gly262–Phe282 traverse the membrane as a helical segment. Residues Ser283 to Arg302 are Cytoplasmic-facing. A helical transmembrane segment spans residues Val303–Leu323. The Lumenal portion of the chain corresponds to Arg324 to Gly330. A helical membrane pass occupies residues Leu331–Leu351. At Glu352–Ser360 the chain is on the cytoplasmic side. Residues Trp361–Ile381 form a helical membrane-spanning segment. Residues Gln382–Asp392 lie on the Lumenal side of the membrane.

It belongs to the PIGM family. Part of the glycosylphosphatidylinositol-mannosyltransferase I complex that is composed of PIGM and PIGX.

The protein localises to the endoplasmic reticulum membrane. Its pathway is glycolipid biosynthesis; glycosylphosphatidylinositol-anchor biosynthesis. In terms of biological role, catalytic subunit of the glycosylphosphatidylinositol-mannosyltransferase I complex which catalyzes the transfer of the first mannose, via an alpha-1,4 bond from a dolichol-phosphate-mannose (Dol-P-Man) to the glucosaminyl acyl phosphatidylinositol (GlcN-(acyl)PI) intermediate to generate alpha-D-Man-(1-&gt;4)-alpha-D-GlcN-(1-&gt;6)-(1-radyl,2-acyl-sn-glycero-3-phospho)-2-acyl-inositol and participates in the sixth step of the glycosylphosphatidylinositol-anchor biosynthesis. The chain is GPI alpha-1,4-mannosyltransferase I, catalytic subunit from Danio rerio (Zebrafish).